We begin with the raw amino-acid sequence, 370 residues long: Peptide chain release factor 1 (370 aa).

Residue Gln-239 is modified to N5-methylglutamine.

The protein belongs to the prokaryotic/mitochondrial release factor family. Post-translationally, methylated by PrmC. Methylation increases the termination efficiency of RF1.

The protein resides in the cytoplasm. Peptide chain release factor 1 directs the termination of translation in response to the peptide chain termination codons UAG and UAA. The sequence is that of Peptide chain release factor 1 from Bacteroides fragilis (strain ATCC 25285 / DSM 2151 / CCUG 4856 / JCM 11019 / LMG 10263 / NCTC 9343 / Onslow / VPI 2553 / EN-2).